The chain runs to 119 residues: Ribosome-binding factor A (119 aa).

This sequence belongs to the RbfA family. As to quaternary structure, monomer. Binds 30S ribosomal subunits, but not 50S ribosomal subunits or 70S ribosomes.

It localises to the cytoplasm. Its function is as follows. One of several proteins that assist in the late maturation steps of the functional core of the 30S ribosomal subunit. Associates with free 30S ribosomal subunits (but not with 30S subunits that are part of 70S ribosomes or polysomes). Required for efficient processing of 16S rRNA. May interact with the 5'-terminal helix region of 16S rRNA. In Lactococcus lactis subsp. cremoris (strain SK11), this protein is Ribosome-binding factor A.